We begin with the raw amino-acid sequence, 164 residues long: R-phycoerythrin alpha chain (164 aa).

(2R,3E)-phycoerythrobilin is bound by residues cysteine 82 and cysteine 139.

This sequence belongs to the phycobiliprotein family. In terms of assembly, heterodimer of an alpha and a beta chain. Contains two covalently linked bilin chromophores.

It is found in the plastid. It localises to the chloroplast thylakoid membrane. Light-harvesting photosynthetic bile pigment-protein from the phycobiliprotein complex. This chain is R-phycoerythrin alpha chain (cpeA), found in Pyropia tenera (Nori).